The chain runs to 378 residues: Flap endonuclease 1 (378 aa).

Positions 1-102 (MGIHGLAKLI…GELAKRSERR (102 aa)) are N-domain. At Arg19 the chain carries Symmetric dimethylarginine; by PRMT5. Residue Asp34 coordinates Mg(2+). Positions 47 and 69 each coordinate DNA. Lys78 carries the post-translational modification N6-acetyllysine. Asp84 is a Mg(2+) binding site. Residues Arg98 and Arg102 each carry the symmetric dimethylarginine; by PRMT5 modification. The tract at residues 120 to 251 (EVEKFTKRLV…KRAVDLIQKH (132 aa)) is I-domain. Mg(2+) contacts are provided by Glu156, Glu158, Asp177, and Asp179. Residue Glu156 participates in DNA binding. A Phosphoserine; by CDK2 modification is found at Ser185. A Symmetric dimethylarginine; by PRMT5 modification is found at Arg190. Ser195 is subject to Phosphoserine. Gly229 and Asp231 together coordinate DNA. Position 231 (Asp231) interacts with Mg(2+). Ser253, Ser291, and Ser333 each carry phosphoserine. The tract at residues 325-378 (RLSKSRQGSTQGRLDDFFKVTGSLSSAKRKEPEPKGPAKKKAKTGGAGKFRRGK) is disordered. Phosphothreonine is present on Thr334. An interaction with PCNA region spans residues 334–342 (TQGRLDDFF). An N6-acetyllysine mark is found at Lys352, Lys373, and Lys378. A compositionally biased stretch (basic residues) spans 361-378 (PAKKKAKTGGAGKFRRGK).

This sequence belongs to the XPG/RAD2 endonuclease family. FEN1 subfamily. Interacts with PCNA. Three molecules of FEN1 bind to one PCNA trimer with each molecule binding to one PCNA monomer. PCNA stimulates the nuclease activity without altering cleavage specificity. The C-terminal domain binds EP300; can bind simultaneously to both PCNA and EP300. Interacts with DDX11; this interaction is direct and increases flap endonuclease activity of FEN1. Interacts with WDR4; regulating its endonuclease activity. Interacts with POLB. Mg(2+) is required as a cofactor. Acetylated by EP300. Acetylation inhibits both endonuclease and exonuclease activity. Acetylation also reduces DNA-binding activity but does not affect interaction with PCNA or EP300. In terms of processing, phosphorylation upon DNA damage induces relocalization to the nuclear plasma. Phosphorylation at Ser-185 by CDK2 occurs during late S-phase and results in dissociation from PCNA. Post-translationally, methylation at Arg-190 by PRMT5 impedes Ser-185 phosphorylation and increases interaction with PCNA.

It is found in the nucleus. The protein resides in the nucleolus. It localises to the nucleoplasm. Its subcellular location is the mitochondrion. Structure-specific nuclease with 5'-flap endonuclease and 5'-3' exonuclease activities involved in DNA replication and repair. During DNA replication, cleaves the 5'-overhanging flap structure that is generated by displacement synthesis when DNA polymerase encounters the 5'-end of a downstream Okazaki fragment. It enters the flap from the 5'-end and then tracks to cleave the flap base, leaving a nick for ligation. Also involved in the long patch base excision repair (LP-BER) pathway, by cleaving within the apurinic/apyrimidinic (AP) site-terminated flap. Acts as a genome stabilization factor that prevents flaps from equilibrating into structures that lead to duplications and deletions. Also possesses 5'-3' exonuclease activity on nicked or gapped double-stranded DNA, and exhibits RNase H activity. Also involved in replication and repair of rDNA and in repairing mitochondrial DNA. The protein is Flap endonuclease 1 of Mus musculus (Mouse).